Reading from the N-terminus, the 524-residue chain is Peptide chain release factor 3 (524 aa).

Residues 9–275 (SRRRTFAIIS…AVVDLSPPPI (267 aa)) form the tr-type G domain. GTP is bound by residues 18–25 (SHPDAGKT), 86–90 (DTPGH), and 140–143 (NKLD).

This sequence belongs to the TRAFAC class translation factor GTPase superfamily. Classic translation factor GTPase family. PrfC subfamily.

The protein localises to the cytoplasm. Its function is as follows. Increases the formation of ribosomal termination complexes and stimulates activities of RF-1 and RF-2. It binds guanine nucleotides and has strong preference for UGA stop codons. It may interact directly with the ribosome. The stimulation of RF-1 and RF-2 is significantly reduced by GTP and GDP, but not by GMP. The sequence is that of Peptide chain release factor 3 from Dechloromonas aromatica (strain RCB).